The following is a 126-amino-acid chain: Fluoride-specific ion channel FluC (126 aa).

A run of 4 helical transmembrane segments spans residues 5–25, 35–55, 68–88, and 99–119; these read VLAV…LGLW, WGTL…MAFF, FAVT…LEMF, and ALVG…LGFL. Na(+)-binding residues include G75 and T78.

This sequence belongs to the fluoride channel Fluc/FEX (TC 1.A.43) family.

It localises to the cell inner membrane. It catalyses the reaction fluoride(in) = fluoride(out). Its activity is regulated as follows. Na(+) is not transported, but it plays an essential structural role and its presence is essential for fluoride channel function. Its function is as follows. Fluoride-specific ion channel. Important for reducing fluoride concentration in the cell, thus reducing its toxicity. This chain is Fluoride-specific ion channel FluC, found in Marinobacter nauticus (strain ATCC 700491 / DSM 11845 / VT8) (Marinobacter aquaeolei).